The primary structure comprises 227 residues: UPF0173 metal-dependent hydrolase Saci_1512 (227 aa).

This sequence belongs to the UPF0173 family.

This Sulfolobus acidocaldarius (strain ATCC 33909 / DSM 639 / JCM 8929 / NBRC 15157 / NCIMB 11770) protein is UPF0173 metal-dependent hydrolase Saci_1512.